The chain runs to 296 residues: Protoheme IX farnesyltransferase (296 aa).

The Cytoplasmic segment spans residues 1 to 9 (MMFKQYLQV). A helical transmembrane segment spans residues 10 to 28 (TKPGIIFGNLISVIGGFLL). Over 29 to 37 (ASKGSIDYP) the chain is Periplasmic. Residues 38–56 (LFIYTLVGVSLVVASGCVF) traverse the membrane as a helical segment. Topologically, residues 57–78 (NNYIDRDIDRKMERTKNRVLVK) are cytoplasmic. A helical membrane pass occupies residues 79–97 (GLISPGVSLVYATLLGIAG). Residues 98 to 107 (FMLLWFGANP) are Periplasmic-facing. A helical membrane pass occupies residues 108-126 (LACWLGVMGFVVYVGVYSL). The Cytoplasmic portion of the chain corresponds to 127-197 (YMKRHSVYGT…YQAANIPVLP (71 aa)). A helical membrane pass occupies residues 198–216 (VVKGISVAKNHITLYIIAF). Residues 217–228 (AVATLMLTLGGY) lie on the Periplasmic side of the membrane. Residues 229-247 (AGYKYLVVAAAVSVWWLGM) form a helical membrane-spanning segment. At 248-268 (ALRGYKVEDDKVWARKLFGFS) the chain is on the cytoplasmic side. The helical transmembrane segment at 269–287 (IIAITALSIMMSVDFMVPN) threads the bilayer. Over 288 to 296 (SQNLLTYVW) the chain is Periplasmic.

Belongs to the UbiA prenyltransferase family. Protoheme IX farnesyltransferase subfamily.

It localises to the cell inner membrane. It carries out the reaction heme b + (2E,6E)-farnesyl diphosphate + H2O = Fe(II)-heme o + diphosphate. It participates in porphyrin-containing compound metabolism; heme O biosynthesis; heme O from protoheme: step 1/1. Converts heme B (protoheme IX) to heme O by substitution of the vinyl group on carbon 2 of heme B porphyrin ring with a hydroxyethyl farnesyl side group. The chain is Protoheme IX farnesyltransferase from Salmonella typhimurium (strain LT2 / SGSC1412 / ATCC 700720).